Consider the following 95-residue polypeptide: uncharacterized protein (95 aa).

Residues D65 to I95 form a disordered region.

This is an uncharacterized protein from Lymantria dispar multicapsid nuclear polyhedrosis virus (LdMNPV).